Here is a 184-residue protein sequence, read N- to C-terminus: ADP-ribosylation factor-like protein 8b (184 aa).

The note=Mediates targeting to membranes intramembrane region spans 1–18; that stretch reads MGLWDALLNWLRSLFFKQ. GTP-binding positions include 29 to 34, 48 to 51, 70 to 74, and 129 to 132; these read NAGKTS, MIPT, DLGGQ, and NKID.

The protein belongs to the small GTPase superfamily. Arf family. In terms of assembly, interacts with tubulin.

It is found in the late endosome membrane. It localises to the lysosome membrane. The protein localises to the cytoplasm. Its subcellular location is the cytoskeleton. The protein resides in the spindle. Functionally, may play a role in lysosome motility. May play a role in chromosome segregation. In terms of biological role, (Microbial infection) Component of tomato mosaic virus (ToMV) RNA replication complexes. Required for tobamovirus multiplication, especially for efficient negative-strand RNA synthesis and viral RNA capping. The chain is ADP-ribosylation factor-like protein 8b from Arabidopsis thaliana (Mouse-ear cress).